The sequence spans 394 residues: Bone morphogenetic protein 15 (394 aa).

The first 18 residues, 1–18 (MVLLSILRILLLWGLVLF), serve as a signal peptide directing secretion. A propeptide spanning residues 19–269 (MEHRVQMTQV…DPSLLLRRAR (251 aa)) is cleaved from the precursor. Asn87 and Asn238 each carry an N-linked (GlcNAc...) asparagine glycan. 3 disulfides stabilise this stretch: Cys293-Cys359, Cys322-Cys391, and Cys326-Cys393. The N-linked (GlcNAc...) asparagine glycan is linked to Asn375.

The protein belongs to the TGF-beta family. As to quaternary structure, homodimer or heterodimer (Potential). But, in contrast to other members of this family, cannot be disulfide-linked.

It is found in the secreted. May be involved in follicular development. Seems to be an oocyte-specific growth/differentiation factor that stimulates folliculogenesis and granulosa cell (GC) growth. The chain is Bone morphogenetic protein 15 (BMP15) from Bos taurus (Bovine).